Here is a 38-residue protein sequence, read N- to C-terminus: Photosystem II reaction center protein Y (38 aa).

The chain crosses the membrane as a helical span at residues 4 to 22 (TIVVFAPIIAALAWVVFNI).

The protein belongs to the PsbY family. PSII is composed of 1 copy each of membrane proteins PsbA, PsbB, PsbC, PsbD, PsbE, PsbF, PsbH, PsbI, PsbJ, PsbK, PsbL, PsbM, PsbT, PsbX, PsbY, Psb30/Ycf12, peripheral proteins PsbO, CyanoQ (PsbQ), PsbU, PsbV and a large number of cofactors. It forms dimeric complexes.

It localises to the cellular thylakoid membrane. Loosely associated component of the core of photosystem II (PSII), it is not always seen in crystals. PSII is a light-driven water plastoquinone oxidoreductase, using light energy to abstract electrons from H(2)O, generating a proton gradient subsequently used for ATP formation. This is Photosystem II reaction center protein Y from Prochlorococcus marinus (strain MIT 9215).